The chain runs to 417 residues: Acetyltransferase nanB (417 aa).

Positions 1 to 24 (MRPSTTTLSLLVFLISSILLATTG) are cleaved as a signal peptide. The next 5 helical transmembrane spans lie at 150–170 (LAVS…LKNI), 284–304 (YLNN…FNWI), 307–327 (VQDG…GYFL), 356–376 (VGAL…VYPF), and 389–409 (FVDV…AAAL).

The protein belongs to the wax synthase family.

It localises to the membrane. It functions in the pathway secondary metabolite biosynthesis. In terms of biological role, acetyltransferase; part of the gene cluster that mediates the biosynthesis of the benzazepine alkaloid nanangelenin A which contains an unprecedented 3,4-dihydro-1-benzazepine-2,5-dione-N-prenyl-N-acetoxy-anthranilamide scaffold. The first step of nanangelenin biosynthesis is catalyzed by the indoleamine 2,3-dioxygenase nanC which produces N-formyl-kynurenine through the catabolism of tryptophan. The two-module NRPS nanA then utilizes anthranilate (Ant) and L-kynurenine (L-Kyn) to assemble the dipeptide product nanangelenin B. The first adenylation domain of nanA (A1) loads anthranilate onto the T1 domain, while A2 loads kynurenine, generated through spontaneous nonenzymatic deformylation of the nanC-supplied N-formyl-kynurenine. The peptide bond formation between the tethered amino acids is catalyzed by the first condensation domain (C1) between anthranilate's carbonyl carbon and kynurenine's aliphatic primary amine. The second C domain (C2) catalyzes the final cyclization event between the aromatic amine of kynurenine and the tethered carbonyl carbon, yielding nanangelenin B. The terminal T3 domain enhances the catalytic efficiency of C2, suggesting the T2-tethered Ant-L-Kyn is transferred to T3 prior to cyclization by C2. Once released from nanA, nanangelenin B is then prenylated by the prenyltransferase nanD to form nanangelenin C. Nanangelenin C is then N-hydroxylated by the FAD-dependent monooxygenase nanF and further acetylated by the acetyltransferase nanB to yield nanangelenin F. Finally, the N-methyltransferase nanE methylates the amide nitrogen of 1-benzazepine to convert nanangelenin F into nanangelenin A. NanE is also able to methylate most of the intermediates of the pathway such as nanangelenin B and nanangelenin C to produce nanangelenin D and nanangelenin E, respectively. The polypeptide is Acetyltransferase nanB (Aspergillus nanangensis).